The following is a 31-amino-acid chain: IVAVLHSSEGVAGTITFIADSQIPLTGPNSI.

It belongs to the Cu-Zn superoxide dismutase family. The cofactor is Cu cation. Zn(2+) serves as cofactor.

It is found in the cytoplasm. It carries out the reaction 2 superoxide + 2 H(+) = H2O2 + O2. Destroys radicals which are normally produced within the cells and which are toxic to biological systems. This chain is Superoxide dismutase [Cu-Zn], found in Striga hermonthica (Purple witchweed).